Consider the following 309-residue polypeptide: Isoaspartyl peptidase/L-asparaginase (309 aa).

T166 serves as the catalytic Nucleophile. Residues 194–197 (RVGD) and 217–220 (TGHG) each bind substrate.

This sequence belongs to the Ntn-hydrolase family. In terms of assembly, heterodimer of an alpha and beta chain produced by autocleavage. In terms of processing, cleaved into an alpha and beta chain by autocatalysis; this activates the enzyme. The N-terminal residue of the beta subunit is responsible for the nucleophile hydrolase activity.

It is found in the cytoplasm. The enzyme catalyses L-asparagine + H2O = L-aspartate + NH4(+). It carries out the reaction Cleavage of a beta-linked Asp residue from the N-terminus of a polypeptide.. Functionally, has both L-asparaginase and beta-aspartyl peptidase activity. Does not have aspartylglucosaminidase activity and is inactive toward GlcNAc-L-Asn. Likewise, has no activity toward glutamine. The sequence is that of Isoaspartyl peptidase/L-asparaginase (asrgl1) from Xenopus laevis (African clawed frog).